The primary structure comprises 388 residues: Succinate--CoA ligase [ADP-forming] subunit beta (388 aa).

Residues 9–244 form the ATP-grasp domain; it reads KQLFAEYGLP…PSQEDSREAE (236 aa). Residues lysine 46, 53 to 55, glutamate 99, threonine 102, and glutamate 107 contribute to the ATP site; that span reads GRG. Mg(2+) is bound by residues asparagine 199 and aspartate 213. Substrate-binding positions include asparagine 264 and 321-323; that span reads GIV.

It belongs to the succinate/malate CoA ligase beta subunit family. As to quaternary structure, heterotetramer of two alpha and two beta subunits. The cofactor is Mg(2+).

It carries out the reaction succinate + ATP + CoA = succinyl-CoA + ADP + phosphate. The enzyme catalyses GTP + succinate + CoA = succinyl-CoA + GDP + phosphate. Its pathway is carbohydrate metabolism; tricarboxylic acid cycle; succinate from succinyl-CoA (ligase route): step 1/1. Functionally, succinyl-CoA synthetase functions in the citric acid cycle (TCA), coupling the hydrolysis of succinyl-CoA to the synthesis of either ATP or GTP and thus represents the only step of substrate-level phosphorylation in the TCA. The beta subunit provides nucleotide specificity of the enzyme and binds the substrate succinate, while the binding sites for coenzyme A and phosphate are found in the alpha subunit. In Marinobacter nauticus (strain ATCC 700491 / DSM 11845 / VT8) (Marinobacter aquaeolei), this protein is Succinate--CoA ligase [ADP-forming] subunit beta.